A 58-amino-acid polypeptide reads, in one-letter code: UPF0391 membrane protein Shewmr4_2671 (58 aa).

The next 2 membrane-spanning stretches (helical) occupy residues 6 to 26 (LMFL…IAGA) and 28 to 48 (AGIA…SLLV).

It belongs to the UPF0391 family.

It localises to the cell membrane. The protein is UPF0391 membrane protein Shewmr4_2671 of Shewanella sp. (strain MR-4).